A 351-amino-acid chain; its full sequence is DNA polymerase IV (351 aa).

Residues Ile4 to Gly185 enclose the UmuC domain. 2 residues coordinate Mg(2+): Asp8 and Asp103. Residue Glu104 is part of the active site.

The protein belongs to the DNA polymerase type-Y family. In terms of assembly, monomer. Mg(2+) serves as cofactor.

The protein resides in the cytoplasm. The enzyme catalyses DNA(n) + a 2'-deoxyribonucleoside 5'-triphosphate = DNA(n+1) + diphosphate. Poorly processive, error-prone DNA polymerase involved in untargeted mutagenesis. Copies undamaged DNA at stalled replication forks, which arise in vivo from mismatched or misaligned primer ends. These misaligned primers can be extended by PolIV. Exhibits no 3'-5' exonuclease (proofreading) activity. May be involved in translesional synthesis, in conjunction with the beta clamp from PolIII. This chain is DNA polymerase IV, found in Photorhabdus laumondii subsp. laumondii (strain DSM 15139 / CIP 105565 / TT01) (Photorhabdus luminescens subsp. laumondii).